The primary structure comprises 240 residues: 2-C-methyl-D-erythritol 2,4-cyclodiphosphate synthase, apicoplast (240 aa).

A divalent metal cation contacts are provided by Asp-71 and His-73. 4-CDP-2-C-methyl-D-erythritol 2-phosphate-binding positions include 71 to 73 (DIH) and 115 to 116 (HS). His-123 serves as a coordination point for a divalent metal cation. 4-CDP-2-C-methyl-D-erythritol 2-phosphate is bound by residues 137–139 (DIG), 142–146 (FPDKD), 181–187 (AQVPKIS), and 212–214 (GKT).

This sequence belongs to the IspF family. Homotrimer. It depends on a divalent metal cation as a cofactor.

The protein resides in the plastid. It is found in the apicoplast. The enzyme catalyses 4-CDP-2-C-methyl-D-erythritol 2-phosphate = 2-C-methyl-D-erythritol 2,4-cyclic diphosphate + CMP. The protein operates within isoprenoid biosynthesis; isopentenyl diphosphate biosynthesis via DXP pathway; isopentenyl diphosphate from 1-deoxy-D-xylulose 5-phosphate: step 4/6. In terms of biological role, in the mevalonate-independent isoprenoid biosynthetic pathway, converts 4-diphosphocytidyl-2C-methyl-D-erythritol 2-phosphate into 2C-methyl-D-erythritol 2,4-cyclodiphosphate and CMP. The chain is 2-C-methyl-D-erythritol 2,4-cyclodiphosphate synthase, apicoplast from Plasmodium falciparum (isolate 3D7).